We begin with the raw amino-acid sequence, 131 residues long: Small ribosomal subunit protein uS8 (131 aa).

The protein belongs to the universal ribosomal protein uS8 family. Part of the 30S ribosomal subunit. Contacts proteins S5 and S12.

Its function is as follows. One of the primary rRNA binding proteins, it binds directly to 16S rRNA central domain where it helps coordinate assembly of the platform of the 30S subunit. The sequence is that of Small ribosomal subunit protein uS8 from Cupriavidus metallidurans (strain ATCC 43123 / DSM 2839 / NBRC 102507 / CH34) (Ralstonia metallidurans).